The following is a 303-amino-acid chain: Quinolinate synthase (303 aa).

The iminosuccinate site is built by His24 and Ser41. Cys86 is a binding site for [4Fe-4S] cluster. Iminosuccinate contacts are provided by residues 112 to 114 (YIN) and Ser129. Cys172 is a binding site for [4Fe-4S] cluster. Residues 198–200 (HPE) and Thr215 contribute to the iminosuccinate site. Cys260 serves as a coordination point for [4Fe-4S] cluster.

It belongs to the quinolinate synthase family. Type 2 subfamily. The cofactor is [4Fe-4S] cluster.

It localises to the cytoplasm. The catalysed reaction is iminosuccinate + dihydroxyacetone phosphate = quinolinate + phosphate + 2 H2O + H(+). Its pathway is cofactor biosynthesis; NAD(+) biosynthesis; quinolinate from iminoaspartate: step 1/1. Its function is as follows. Catalyzes the condensation of iminoaspartate with dihydroxyacetone phosphate to form quinolinate. This is Quinolinate synthase from Caldicellulosiruptor saccharolyticus (strain ATCC 43494 / DSM 8903 / Tp8T 6331).